Reading from the N-terminus, the 196-residue chain is Large ribosomal subunit protein uL18 (196 aa).

Belongs to the universal ribosomal protein uL18 family. Part of the 50S ribosomal subunit. Contacts the 5S and 23S rRNAs.

Its function is as follows. This is one of the proteins that bind and probably mediate the attachment of the 5S RNA into the large ribosomal subunit, where it forms part of the central protuberance. The chain is Large ribosomal subunit protein uL18 from Thermofilum pendens (strain DSM 2475 / Hrk 5).